The primary structure comprises 311 residues: Methionyl-tRNA formyltransferase (311 aa).

Residue 110-113 (SLLP) coordinates (6S)-5,6,7,8-tetrahydrofolate.

It belongs to the Fmt family.

The catalysed reaction is L-methionyl-tRNA(fMet) + (6R)-10-formyltetrahydrofolate = N-formyl-L-methionyl-tRNA(fMet) + (6S)-5,6,7,8-tetrahydrofolate + H(+). Its function is as follows. Attaches a formyl group to the free amino group of methionyl-tRNA(fMet). The formyl group appears to play a dual role in the initiator identity of N-formylmethionyl-tRNA by promoting its recognition by IF2 and preventing the misappropriation of this tRNA by the elongation apparatus. The polypeptide is Methionyl-tRNA formyltransferase (Streptococcus gordonii (strain Challis / ATCC 35105 / BCRC 15272 / CH1 / DL1 / V288)).